The chain runs to 582 residues: Regulatory solute carrier protein family 1 member 1 (582 aa).

8 disordered regions span residues 1–32 (MSSL…ARSV), 56–76 (KASA…LQVL), 143–180 (EKSW…VPQD), 303–325 (VDMS…HGQP), 363–384 (VTCQ…SGRR), 390–409 (LTPS…SESG), 426–452 (ASTS…ESAR), and 483–529 (SEGA…LSTP). The segment covering 16 to 32 (SGQSPEVGSPTSLARSV) has biased composition (polar residues). The span at 148 to 179 (PENQTPSPVNGLQQHRETGSVQREAGQQSVPQ) shows a compositional bias: polar residues. Over residues 390-408 (LTPSDQYSQGSCHQATSES) the composition is skewed to polar residues. Composition is skewed to basic and acidic residues over residues 438 to 452 (SPDR…ESAR) and 490 to 503 (PSEH…DRPE). The 41-residue stretch at 536–576 (IFPAADVDRILGAGFTLQEALGALHRVGGNADLALLVLLAK) folds into the UBA domain.

Interacts with YRDC. In terms of tissue distribution, expressed in epithelial and subepithelial cells of small intestine.

The protein localises to the cell membrane. It localises to the nucleus. Its subcellular location is the golgi apparatus. The protein resides in the trans-Golgi network. Mediates transcriptional and post-transcriptional regulation of SLC5A1. Inhibits a dynamin and PKC-dependent exocytotic pathway of SLC5A1. Also involved in transcriptional regulation of SLC22A2. Exhibits glucose-dependent, short-term inhibition of SLC5A1 and SLC22A2 by inhibiting the release of vesicles from the trans-Golgi network. Regulates the expression of SLC5A1 in a tissue-specific manner and is specifically involved in its regulation in the small intestine. The polypeptide is Regulatory solute carrier protein family 1 member 1 (Rsc1a1) (Mus musculus (Mouse)).